The following is a 520-amino-acid chain: Maturase K (520 aa).

It belongs to the intron maturase 2 family. MatK subfamily.

It localises to the plastid. Its subcellular location is the chloroplast. Its function is as follows. Usually encoded in the trnK tRNA gene intron. Probably assists in splicing its own and other chloroplast group II introns. The chain is Maturase K from Linum perenne (Perennial flax).